A 697-amino-acid chain; its full sequence is Polyribonucleotide nucleotidyltransferase (697 aa).

D487 and D493 together coordinate Mg(2+). One can recognise a KH domain in the interval P554–I613. An S1 motif domain is found at G623 to K691.

This sequence belongs to the polyribonucleotide nucleotidyltransferase family. Requires Mg(2+) as cofactor.

It localises to the cytoplasm. It carries out the reaction RNA(n+1) + phosphate = RNA(n) + a ribonucleoside 5'-diphosphate. In terms of biological role, involved in mRNA degradation. Catalyzes the phosphorolysis of single-stranded polyribonucleotides processively in the 3'- to 5'-direction. The chain is Polyribonucleotide nucleotidyltransferase from Protochlamydia amoebophila (strain UWE25).